The chain runs to 216 residues: Urease accessory protein UreG (216 aa).

25 to 32 (GPVGSGKT) provides a ligand contact to GTP.

It belongs to the SIMIBI class G3E GTPase family. UreG subfamily. Homodimer. UreD, UreF and UreG form a complex that acts as a GTP-hydrolysis-dependent molecular chaperone, activating the urease apoprotein by helping to assemble the nickel containing metallocenter of UreC. The UreE protein probably delivers the nickel.

Its subcellular location is the cytoplasm. In terms of biological role, facilitates the functional incorporation of the urease nickel metallocenter. This process requires GTP hydrolysis, probably effectuated by UreG. In Burkholderia mallei (strain NCTC 10247), this protein is Urease accessory protein UreG.